A 205-amino-acid polypeptide reads, in one-letter code: GTP cyclohydrolase-2 (205 aa).

49 to 53 provides a ligand contact to GTP; sequence RIHSE. Residues cysteine 54, cysteine 65, and cysteine 67 each coordinate Zn(2+). Residues glutamine 70, 92–94, and threonine 114 each bind GTP; that span reads EGR. Catalysis depends on aspartate 126, which acts as the Proton acceptor. The active-site Nucleophile is arginine 128. Residues threonine 149 and lysine 154 each contribute to the GTP site.

Belongs to the GTP cyclohydrolase II family. Zn(2+) is required as a cofactor.

The enzyme catalyses GTP + 4 H2O = 2,5-diamino-6-hydroxy-4-(5-phosphoribosylamino)-pyrimidine + formate + 2 phosphate + 3 H(+). Its pathway is cofactor biosynthesis; riboflavin biosynthesis; 5-amino-6-(D-ribitylamino)uracil from GTP: step 1/4. Its function is as follows. Catalyzes the conversion of GTP to 2,5-diamino-6-ribosylamino-4(3H)-pyrimidinone 5'-phosphate (DARP), formate and pyrophosphate. The protein is GTP cyclohydrolase-2 of Shewanella loihica (strain ATCC BAA-1088 / PV-4).